The following is a 336-amino-acid chain: UPF0104 membrane protein MJ1595 (336 aa).

9 helical membrane passes run 9-29, 40-60, 68-88, 127-147, 154-174, 223-243, 245-265, 285-305, and 306-326; these read STIL…YIGL, NPEY…ILSA, ILGY…GLFI, VLDT…FVVT, YLIL…YLIA, WEVV…ILKL, LLFL…VYLI, VMIL…AVTL, and LDRL…MLII.

Belongs to the UPF0104 family.

Its subcellular location is the cell membrane. This chain is UPF0104 membrane protein MJ1595, found in Methanocaldococcus jannaschii (strain ATCC 43067 / DSM 2661 / JAL-1 / JCM 10045 / NBRC 100440) (Methanococcus jannaschii).